A 150-amino-acid chain; its full sequence is Large ribosomal subunit protein uL15 (150 aa).

The segment at 1 to 57 is disordered; it reads MRLEDIRPQAGSTRRRRRLGRGVSAGQGASCGKGMRGQKARKGGSTRPGFEGGQTPL. A compositionally biased stretch (gly residues) spans 23–35; the sequence is VSAGQGASCGKGM.

The protein belongs to the universal ribosomal protein uL15 family. As to quaternary structure, part of the 50S ribosomal subunit.

In terms of biological role, binds to the 23S rRNA. In Synechococcus sp. (strain JA-2-3B'a(2-13)) (Cyanobacteria bacterium Yellowstone B-Prime), this protein is Large ribosomal subunit protein uL15.